The following is a 169-amino-acid chain: Disulfide bond formation protein B (169 aa).

Residues Met1–Val8 are Cytoplasmic-facing. Residues Phe9–Tyr25 traverse the membrane as a helical segment. The Periplasmic portion of the chain corresponds to Phe26 to Val43. Residues Cys35 and Cys38 are joined by a disulfide bond. Residues Ala44–Pro60 form a helical membrane-spanning segment. Over Lys61–Val67 the chain is Cytoplasmic. Residues Tyr68–Gly84 traverse the membrane as a helical segment. At Arg85–Gly141 the chain is on the periplasmic side. The cysteines at positions 100 and 127 are disulfide-linked. Residues Trp142 to Arg160 traverse the membrane as a helical segment. At Thr161–Thr169 the chain is on the cytoplasmic side.

The protein belongs to the DsbB family.

It localises to the cell inner membrane. In terms of biological role, required for disulfide bond formation in some periplasmic proteins. Acts by oxidizing the DsbA protein. The polypeptide is Disulfide bond formation protein B (Nitrosococcus oceani (strain ATCC 19707 / BCRC 17464 / JCM 30415 / NCIMB 11848 / C-107)).